The sequence spans 252 residues: Small ribosomal subunit protein uS2 (252 aa).

The protein belongs to the universal ribosomal protein uS2 family.

The chain is Small ribosomal subunit protein uS2 from Alcanivorax borkumensis (strain ATCC 700651 / DSM 11573 / NCIMB 13689 / SK2).